The sequence spans 379 residues: Neutral protease 2 homolog TRV_03208 (379 aa).

The first 19 residues, 1–19 (MKFFTALAAVGALLAPALA), serve as a signal peptide directing secretion. The propeptide occupies 20–187 (LPTPASEEAS…DYFSKSLDKR (168 aa)). Intrachain disulfides connect Cys193–Cys263 and Cys270–Cys288. N-linked (GlcNAc...) asparagine glycosylation is present at Asn221. His312 is a Zn(2+) binding site. The active site involves Glu313. Residues His316 and Asp327 each coordinate Zn(2+).

This sequence belongs to the peptidase M35 family. The cofactor is Zn(2+).

The protein localises to the secreted. It catalyses the reaction Preferential cleavage of bonds with hydrophobic residues in P1'. Also 3-Asn-|-Gln-4 and 8-Gly-|-Ser-9 bonds in insulin B chain.. Functionally, secreted metalloproteinase that allows assimilation of proteinaceous substrates. Shows high activities on basic nuclear substrates such as histone and protamine. May be involved in virulence. The chain is Neutral protease 2 homolog TRV_03208 from Trichophyton verrucosum (strain HKI 0517).